The chain runs to 115 residues: Glutaredoxin 4 (115 aa).

The 103-residue stretch at Ile5 to Tyr107 folds into the Glutaredoxin domain. Lys22 lines the glutathione pocket. Residue Cys30 participates in [2Fe-2S] cluster binding. Glutathione is bound by residues Arg59, Phe71, and Cys84–Asp85.

It belongs to the glutaredoxin family. Monothiol subfamily. As to quaternary structure, homodimer.

The protein localises to the cytoplasm. Its function is as follows. Monothiol glutaredoxin involved in the biogenesis of iron-sulfur clusters. The sequence is that of Glutaredoxin 4 (grxD) from Shigella flexneri.